The chain runs to 73 residues: Translation initiation factor IF-1 (73 aa).

The S1-like domain occupies methionine 1–lysine 73.

It belongs to the IF-1 family. In terms of assembly, component of the 30S ribosomal translation pre-initiation complex which assembles on the 30S ribosome in the order IF-2 and IF-3, IF-1 and N-formylmethionyl-tRNA(fMet); mRNA recruitment can occur at any time during PIC assembly.

It localises to the cytoplasm. One of the essential components for the initiation of protein synthesis. Stabilizes the binding of IF-2 and IF-3 on the 30S subunit to which N-formylmethionyl-tRNA(fMet) subsequently binds. Helps modulate mRNA selection, yielding the 30S pre-initiation complex (PIC). Upon addition of the 50S ribosomal subunit IF-1, IF-2 and IF-3 are released leaving the mature 70S translation initiation complex. This chain is Translation initiation factor IF-1, found in Mycobacterium avium (strain 104).